A 201-amino-acid polypeptide reads, in one-letter code: Phosphatidylglycerophosphatase and protein-tyrosine phosphatase 1 (201 aa).

The N-terminal 27 residues, 1 to 27 (MAATALLEAGLARVLFYPTLLYTLFRG), are a transit peptide targeting the mitochondrion. The Tyrosine-protein phosphatase domain occupies 37–188 (WYHRIDPTVL…LKEFHKQITA (152 aa)). The active-site Phosphocysteine intermediate is Cys-132.

This sequence belongs to the protein-tyrosine phosphatase family. Non-receptor class dual specificity subfamily. As to quaternary structure, interacts with STYXL1; the interaction inhibits PTPMT1 catalytic activity.

The protein localises to the mitochondrion inner membrane. It carries out the reaction a 1,2-diacyl-sn-glycero-3-phospho-(1'-sn-glycero-3'-phosphate) + H2O = a 1,2-diacyl-sn-glycero-3-phospho-(1'-sn-glycerol) + phosphate. It catalyses the reaction O-phospho-L-tyrosyl-[protein] + H2O = L-tyrosyl-[protein] + phosphate. The enzyme catalyses O-phospho-L-seryl-[protein] + H2O = L-seryl-[protein] + phosphate. The catalysed reaction is O-phospho-L-threonyl-[protein] + H2O = L-threonyl-[protein] + phosphate. It carries out the reaction 1,2-di-(9Z-octadecenoyl)-sn-glycero-3-phospho-(1'-sn-glycerol-3'-phosphate) + H2O = 1,2-di-(9Z-octadecenoyl)-sn-glycero-3-phospho-(1'-sn-glycerol) + phosphate. It catalyses the reaction 1,2-dioctanoyl-sn-glycero-3-phospho-(1D-myo-inositol-5-phosphate) + H2O = 1,2-dioctanoyl-sn-glycero-3-phospho-(1D-myo-inositol) + phosphate. The enzyme catalyses a 1-acyl-2-hexanoyl-sn-glycero-3-phospho-(1D-myo-inositol-5-phosphate) + H2O = a 1-acyl-2-hexanoyl-sn-glycero-3-phospho-(1D-myo-inositol) + phosphate. The catalysed reaction is 1,2-dibutyryl-sn-glycero-3-phospho-(1D-myo-inositol-5-phosphate) + H2O = 1,2-dibutyryl-sn-glycero-3-phospho-(1D-myo-inositol) + phosphate. The protein operates within phospholipid metabolism; phosphatidylglycerol biosynthesis; phosphatidylglycerol from CDP-diacylglycerol: step 2/2. In terms of biological role, lipid phosphatase which dephosphorylates phosphatidylglycerophosphate (PGP) to phosphatidylglycerol (PG). PGP is an essential intermediate in the biosynthetic pathway of cardiolipin, a mitochondrial-specific phospholipid regulating the membrane integrity and activities of the organelle. Has also been shown to display phosphatase activity toward phosphoprotein substrates, specifically mediates dephosphorylation of mitochondrial proteins, thereby playing an essential role in ATP production. Has probably a preference for proteins phosphorylated on Ser and/or Thr residues compared to proteins phosphorylated on Tyr residues. Probably involved in regulation of insulin secretion in pancreatic beta cells. May prevent intrinsic apoptosis, probably by regulating mitochondrial membrane integrity. The chain is Phosphatidylglycerophosphatase and protein-tyrosine phosphatase 1 from Homo sapiens (Human).